Here is a 494-residue protein sequence, read N- to C-terminus: Alpha-amylase-related protein (494 aa).

The first 20 residues, 1–20 (MIKFALALTLCLAGASLSLA), serve as a signal peptide directing secretion. Glutamine 21 carries the pyrrolidone carboxylic acid modification. Cysteine 48 and cysteine 104 are disulfide-bonded. 3 residues coordinate Ca(2+): asparagine 118, glutamine 169, and aspartate 178. A disulfide bridge connects residues cysteine 157 and cysteine 171. Arginine 206 provides a ligand contact to chloride. Aspartate 208 serves as the catalytic Nucleophile. Histidine 212 contacts Ca(2+). The active-site Proton donor is the glutamate 245. Chloride-binding residues include asparagine 308 and arginine 343. 3 disulfide bridges follow: cysteine 376–cysteine 382, cysteine 418–cysteine 441, and cysteine 448–cysteine 460.

It belongs to the glycosyl hydrolase 13 family. As to quaternary structure, monomer. It depends on Ca(2+) as a cofactor. Requires chloride as cofactor.

The protein resides in the secreted. It catalyses the reaction Endohydrolysis of (1-&gt;4)-alpha-D-glucosidic linkages in polysaccharides containing three or more (1-&gt;4)-alpha-linked D-glucose units.. This chain is Alpha-amylase-related protein (Amyrel), found in Drosophila bakoue (Fruit fly).